The following is a 448-amino-acid chain: Phosphoglucosamine mutase (448 aa).

Residue Ser100 is the Phosphoserine intermediate of the active site. Residues Ser100, Asp240, Asp242, and Asp244 each contribute to the Mg(2+) site. Ser100 is subject to Phosphoserine.

The protein belongs to the phosphohexose mutase family. Mg(2+) serves as cofactor. In terms of processing, activated by phosphorylation.

The enzyme catalyses alpha-D-glucosamine 1-phosphate = D-glucosamine 6-phosphate. In terms of biological role, catalyzes the conversion of glucosamine-6-phosphate to glucosamine-1-phosphate. This chain is Phosphoglucosamine mutase, found in Bacillus cereus (strain ATCC 10987 / NRS 248).